Here is a 167-residue protein sequence, read N- to C-terminus: MKNEVKFMSEVIKVVDVKIFPHRYLKAETTEKVLNEIYDLDGIVRVIVHGQPLPKTVPFGPARGLPVNHQDRKVIKVKGEEMELRVKVGEIIITVEGEKLEKIMDGIEEICKRNFPFGYDIYVGAFTKIKPTVTDYMKYGDISSIDPRLIGMVDASARLKDSVKMIK.

As to quaternary structure, MCR is composed of three subunits: alpha, beta, and gamma. The function of protein D is not known.

The polypeptide is Methyl-coenzyme M reductase II operon protein D (mrtD) (Methanocaldococcus jannaschii (strain ATCC 43067 / DSM 2661 / JAL-1 / JCM 10045 / NBRC 100440) (Methanococcus jannaschii)).